The primary structure comprises 92 residues: MSETQNTQTKRQRTLVGKVVSNKMDKTVVVLVERRVKHPIYGKIVMRSAKYKAHDESNQYNEGDTVEIAEGRPISRSKSWNVVRLVEAVRII.

This sequence belongs to the universal ribosomal protein uS17 family. As to quaternary structure, part of the 30S ribosomal subunit.

Functionally, one of the primary rRNA binding proteins, it binds specifically to the 5'-end of 16S ribosomal RNA. In Bordetella petrii (strain ATCC BAA-461 / DSM 12804 / CCUG 43448), this protein is Small ribosomal subunit protein uS17.